A 462-amino-acid polypeptide reads, in one-letter code: Glutamate--tRNA ligase 1 (462 aa).

The short motif at 8–18 is the 'HIGH' region element; it reads PSPTGYLHIGG. Positions 237 to 241 match the 'KMSKS' region motif; it reads KLSKR. Lys-240 serves as a coordination point for ATP.

The protein belongs to the class-I aminoacyl-tRNA synthetase family. Glutamate--tRNA ligase type 1 subfamily. In terms of assembly, monomer.

The protein localises to the cytoplasm. It catalyses the reaction tRNA(Glu) + L-glutamate + ATP = L-glutamyl-tRNA(Glu) + AMP + diphosphate. Its function is as follows. Catalyzes the attachment of glutamate to tRNA(Glu) in a two-step reaction: glutamate is first activated by ATP to form Glu-AMP and then transferred to the acceptor end of tRNA(Glu). The chain is Glutamate--tRNA ligase 1 from Campylobacter hominis (strain ATCC BAA-381 / DSM 21671 / CCUG 45161 / LMG 19568 / NCTC 13146 / CH001A).